The following is a 322-amino-acid chain: Ferredoxin--NADP reductase (322 aa).

FAD-binding residues include aspartate 34, glutamine 42, tyrosine 47, valine 87, phenylalanine 120, aspartate 279, and threonine 320.

This sequence belongs to the ferredoxin--NADP reductase type 2 family. Homodimer. The cofactor is FAD.

It carries out the reaction 2 reduced [2Fe-2S]-[ferredoxin] + NADP(+) + H(+) = 2 oxidized [2Fe-2S]-[ferredoxin] + NADPH. This Streptococcus pneumoniae serotype 2 (strain D39 / NCTC 7466) protein is Ferredoxin--NADP reductase.